Consider the following 489-residue polypeptide: tRNA(Ile)-lysidine synthase (489 aa).

Residue 35-40 (SGGLDS) participates in ATP binding.

Belongs to the tRNA(Ile)-lysidine synthase family.

It localises to the cytoplasm. The catalysed reaction is cytidine(34) in tRNA(Ile2) + L-lysine + ATP = lysidine(34) in tRNA(Ile2) + AMP + diphosphate + H(+). Functionally, ligates lysine onto the cytidine present at position 34 of the AUA codon-specific tRNA(Ile) that contains the anticodon CAU, in an ATP-dependent manner. Cytidine is converted to lysidine, thus changing the amino acid specificity of the tRNA from methionine to isoleucine. In Burkholderia mallei (strain ATCC 23344), this protein is tRNA(Ile)-lysidine synthase.